A 624-amino-acid polypeptide reads, in one-letter code: Methyl-accepting chemotaxis protein McpG (624 aa).

Residues Ile11–Asp31 traverse the membrane as a helical segment. In terms of domain architecture, Cache spans Asn36–Gly254. Residues Ser272–Ile292 form a helical membrane-spanning segment. An HAMP domain is found at Arg293–Arg347. Positions Ala352 to Asn588 constitute a Methyl-accepting transducer domain.

Belongs to the methyl-accepting chemotaxis (MCP) protein family.

Its subcellular location is the cell membrane. Chemotactic-signal transducers respond to changes in the concentration of attractants and repellents in the environment, transduce a signal from the outside to the inside of the cell, and facilitate sensory adaptation through the variation of the level of methylation. McpG is a specific gamma-aminobutyric acid (GABA) chemoreceptor that recognizes GABA over a wide range of environmental conditions. Contributes to attraction to and colonization of plant roots. The chain is Methyl-accepting chemotaxis protein McpG from Pseudomonas putida (strain ATCC 47054 / DSM 6125 / CFBP 8728 / NCIMB 11950 / KT2440).